Consider the following 199-residue polypeptide: MAFKLPNLPYAYDALEPYIDQRTMEFHHDKHHNTYVTKLNATVEGTELEHQSLADMIANLDKVPEAMRMSVRNNGGGHFNHSLFWEILSPNSEEKGGVIDDIKAQWGTLDEFKNEFANKATTLFGSGWTWLVVNDGKLEIVTTPNQDNPLTEGKTPILLFDVWEHAYYLKYQNKRPDYMTAFWNIVNWKKVDELYQAAK.

Residues His27, His81, Asp161, and His165 each contribute to the Fe(3+) site. 4 residues coordinate Mn(2+): His27, His81, Asp161, and His165.

The protein belongs to the iron/manganese superoxide dismutase family. In terms of assembly, homodimer. Can also form a heterodimer with SodA. The cofactor is Mn(2+). Fe(3+) is required as a cofactor.

The enzyme catalyses 2 superoxide + 2 H(+) = H2O2 + O2. Destroys superoxide anion radicals which are normally produced within the cells and which are toxic to biological systems. Catalyzes the dismutation of superoxide anion radicals into O2 and H2O2 by successive reduction and oxidation of the transition metal ion at the active site. In Staphylococcus aureus (strain USA300), this protein is Superoxide dismutase [Mn/Fe] 2 (sodM).